A 491-amino-acid chain; its full sequence is AP-2 complex subunit mu (491 aa).

3 positions are modified to phosphoserine: serine 179, serine 180, and serine 181. Positions 209–490 (KDEVFLYVNE…ISKAGSYEVR (282 aa)) constitute an MHD domain.

Belongs to the adaptor complexes medium subunit family. In terms of assembly, adaptor protein complex 2 (AP-2) is a heterotetramer composed of two large adaptins (alpha-type subunit APL3 and beta-type subunit APL1), a medium chain (mu-type subunit APM4) and a small adaptin (sigma-type subunit APS2).

It is found in the membrane. Its subcellular location is the clathrin-coated pit. The protein resides in the cytoplasmic vesicle. The protein localises to the clathrin-coated vesicle membrane. Functionally, component of the adaptor complexes which link clathrin to receptors in coated vesicles. Clathrin-associated protein complexes are believed to interact with the cytoplasmic tails of membrane proteins, leading to their selection and concentration. The polypeptide is AP-2 complex subunit mu (APM4) (Saccharomyces cerevisiae (strain ATCC 204508 / S288c) (Baker's yeast)).